The following is a 79-amino-acid chain: Protein VdcD (79 aa).

Its function is as follows. Involved in the non-oxidative decarboxylation and detoxification of phenolic derivatives under both aerobic and anaerobic conditions, however the precise biochemical function of VdcD in metabolism of phenolic acid is unknown. The sequence is that of Protein VdcD from Streptomyces sp. (strain D7).